The chain runs to 549 residues: Chaperonin GroEL (549 aa).

Residues 30-33 (TLGP), Lys-51, 87-91 (DGTTT), Gly-415, and Asp-496 contribute to the ATP site.

This sequence belongs to the chaperonin (HSP60) family. In terms of assembly, forms a cylinder of 14 subunits composed of two heptameric rings stacked back-to-back. Interacts with the co-chaperonin GroES.

The protein resides in the cytoplasm. The enzyme catalyses ATP + H2O + a folded polypeptide = ADP + phosphate + an unfolded polypeptide.. Its function is as follows. Together with its co-chaperonin GroES, plays an essential role in assisting protein folding. The GroEL-GroES system forms a nano-cage that allows encapsulation of the non-native substrate proteins and provides a physical environment optimized to promote and accelerate protein folding. In Acidiphilium cryptum (strain JF-5), this protein is Chaperonin GroEL.